The primary structure comprises 272 residues: 4-hydroxy-tetrahydrodipicolinate reductase (272 aa).

Residue 12 to 17 participates in NAD(+) binding; the sequence is GALGKM. An NADP(+)-binding site is contributed by K39. Residues 102-104 and 126-129 contribute to the NAD(+) site; these read GTT and SSNY. The Proton donor/acceptor role is filled by H159. H160 serves as a coordination point for (S)-2,3,4,5-tetrahydrodipicolinate. Residue K163 is the Proton donor of the active site. 169-170 lines the (S)-2,3,4,5-tetrahydrodipicolinate pocket; sequence GT.

The protein belongs to the DapB family. Homotetramer.

The protein localises to the cytoplasm. The enzyme catalyses (S)-2,3,4,5-tetrahydrodipicolinate + NAD(+) + H2O = (2S,4S)-4-hydroxy-2,3,4,5-tetrahydrodipicolinate + NADH + H(+). It catalyses the reaction (S)-2,3,4,5-tetrahydrodipicolinate + NADP(+) + H2O = (2S,4S)-4-hydroxy-2,3,4,5-tetrahydrodipicolinate + NADPH + H(+). It functions in the pathway amino-acid biosynthesis; L-lysine biosynthesis via DAP pathway; (S)-tetrahydrodipicolinate from L-aspartate: step 4/4. Functionally, catalyzes the conversion of 4-hydroxy-tetrahydrodipicolinate (HTPA) to tetrahydrodipicolinate. The chain is 4-hydroxy-tetrahydrodipicolinate reductase from Buchnera aphidicola subsp. Baizongia pistaciae (strain Bp).